Here is a 216-residue protein sequence, read N- to C-terminus: Pyrrolidone-carboxylate peptidase (216 aa).

Catalysis depends on residues Glu-80, Cys-143, and His-168.

It belongs to the peptidase C15 family. Homotetramer.

The protein localises to the cytoplasm. The enzyme catalyses Release of an N-terminal pyroglutamyl group from a polypeptide, the second amino acid generally not being Pro.. Its function is as follows. Removes 5-oxoproline from various penultimate amino acid residues except L-proline. The sequence is that of Pyrrolidone-carboxylate peptidase from Cupriavidus pinatubonensis (strain JMP 134 / LMG 1197) (Cupriavidus necator (strain JMP 134)).